A 260-amino-acid polypeptide reads, in one-letter code: Shikimate dehydrogenase (260 aa).

The Proton acceptor role is filled by Lys71. Residue 124 to 128 (GAGGA) coordinates NADP(+).

This sequence belongs to the shikimate dehydrogenase family.

The catalysed reaction is shikimate + NADP(+) = 3-dehydroshikimate + NADPH + H(+). The protein operates within metabolic intermediate biosynthesis; chorismate biosynthesis; chorismate from D-erythrose 4-phosphate and phosphoenolpyruvate: step 4/7. This Sulfurisphaera tokodaii (strain DSM 16993 / JCM 10545 / NBRC 100140 / 7) (Sulfolobus tokodaii) protein is Shikimate dehydrogenase (aroE).